The primary structure comprises 275 residues: 4-diphosphocytidyl-2-C-methyl-D-erythritol kinase (275 aa).

K14 is a catalytic residue. 98 to 108 (PMGAGLGGGSS) lines the ATP pocket. D140 is an active-site residue.

This sequence belongs to the GHMP kinase family. IspE subfamily.

The enzyme catalyses 4-CDP-2-C-methyl-D-erythritol + ATP = 4-CDP-2-C-methyl-D-erythritol 2-phosphate + ADP + H(+). The protein operates within isoprenoid biosynthesis; isopentenyl diphosphate biosynthesis via DXP pathway; isopentenyl diphosphate from 1-deoxy-D-xylulose 5-phosphate: step 3/6. In terms of biological role, catalyzes the phosphorylation of the position 2 hydroxy group of 4-diphosphocytidyl-2C-methyl-D-erythritol. This chain is 4-diphosphocytidyl-2-C-methyl-D-erythritol kinase, found in Francisella tularensis subsp. holarctica (strain FTNF002-00 / FTA).